A 151-amino-acid chain; its full sequence is Large ribosomal subunit protein uL15 (151 aa).

Residues 1–60 (MAENNPLKIHNLRPAPGAKTAKTRVGRGEASKGKTAGRGTKGTKARYQVPERFEGGQMPL) form a disordered region.

It belongs to the universal ribosomal protein uL15 family. Part of the 50S ribosomal subunit.

Binds to the 23S rRNA. The sequence is that of Large ribosomal subunit protein uL15 from Streptomyces avermitilis (strain ATCC 31267 / DSM 46492 / JCM 5070 / NBRC 14893 / NCIMB 12804 / NRRL 8165 / MA-4680).